The sequence spans 326 residues: Virulence factor CaO19.6688 (326 aa).

Disordered stretches follow at residues 19–91 (FNSL…KLPS), 112–137 (EEDN…GTTK), 161–184 (NTTI…PSFP), 222–245 (NVGQ…NDLL), and 276–326 (YEYG…PKIK). Composition is skewed to low complexity over residues 21–42 (SLKS…SSSS), 53–78 (NRNT…NTTP), and 117–137 (EQQL…GTTK).

Virulence factor involved in pathogen-host interaction. Modulates host pro-inflammatory cytokine interleukin-1 beta (IL1B) expression. This is Virulence factor CaO19.6688 from Candida albicans (strain SC5314 / ATCC MYA-2876) (Yeast).